We begin with the raw amino-acid sequence, 682 residues long: E3 ubiquitin-protein ligase RNF103 (682 aa).

The next 4 membrane-spanning stretches (helical) occupy residues 6–26 (FFLL…EAIV), 326–346 (LFVL…FITQ), 366–386 (LLII…LDSF), and 411–431 (MFYS…GLLI). Acidic residues predominate over residues 525-542 (EEMSESSQDTENDSDSDN). The disordered stretch occupies residues 525–549 (EEMSESSQDTENDSDSDNTDTFSSS). An RING-type zinc finger spans residues 618 to 660 (CVVCLENFENGCLLMGLPCGHVFHQNCIVMWLAGGRHCCPVCR).

As to quaternary structure, interacts with DERL1 and VCP. In terms of tissue distribution, expressed in different tissues including hippocampus, cerebral cortex, heart, kidney, spleen and lung. Expression is increased in hippocampus and frontal cortex after chronic treatment with antidepressants.

The protein resides in the endoplasmic reticulum membrane. The catalysed reaction is S-ubiquitinyl-[E2 ubiquitin-conjugating enzyme]-L-cysteine + [acceptor protein]-L-lysine = [E2 ubiquitin-conjugating enzyme]-L-cysteine + N(6)-ubiquitinyl-[acceptor protein]-L-lysine.. Its pathway is protein modification; protein ubiquitination. Functionally, acts as an E2-dependent E3 ubiquitin-protein ligase, probably involved in the ER-associated protein degradation pathway. This chain is E3 ubiquitin-protein ligase RNF103 (Rnf103), found in Rattus norvegicus (Rat).